A 231-amino-acid polypeptide reads, in one-letter code: Quercetin 2,3-dioxygenase (231 aa).

A divalent metal cation contacts are provided by His57, His59, His101, and Glu103.

The protein belongs to the pirin family. Zn(2+) serves as cofactor. Requires Co(2+) as cofactor. Fe(2+) is required as a cofactor.

It carries out the reaction quercetin + O2 = 2-(3,4-dihydroxybenzoyloxy)-4,6-dihydroxybenzoate + CO. The protein operates within flavonoid metabolism; quercetin degradation. Inhibited by kojic acid, sodium diethyldithiocarbamate and 1,10-phenanthroline monohydrochloride. Its function is as follows. Has quercetin 2,3-dioxygenase activity in vitro. Its physiological role is unknown; however, may provide a mechanism that would avoid inhibition of key cellular proteins, such as DNA gyrase, by quercetin. The chain is Quercetin 2,3-dioxygenase (yhhW) from Escherichia coli (strain K12).